The primary structure comprises 138 residues: Odorant-binding protein 22 (138 aa).

The N-terminal stretch at 1-16 is a signal peptide; sequence MKVFIAVFALIAVAAA. R30 is a binding site for (5Z,8Z,11Z,14Z)-eicosatetraenoate. R30 and Y61 together coordinate (9Z)-hexadecenoate. R30 and Y61 together coordinate (9Z,12Z)-octadecadienoate. Intrachain disulfides connect C33/C64, C60/C113, and C103/C122. N-linked (GlcNAc...) asparagine glycosylation occurs at N127.

Belongs to the PBP/GOBP family. As to quaternary structure, monomer in solution. As to expression, high-level expression in female mouth parts, particularly in the proboscis (at protein level). Moderate-level expression in female antenna (at protein level). Expressed in testis but not in the accessory gland or ejaculatory duct (at protein level). Expressed in spermathecae (at protein level). Female salivary gland. Female chemosensory organs: antenna, palp and proboscis. Not detected in midgut.

The protein localises to the secreted. Functionally, involved in modulation of blood-feeding behavior and capacity in female mosquitoes. Required for normal oviposition. Required for normal fecundity and fertility of female and male mosquitoes. Required for normal expression of VGA1 gene, which encodes the egg yolk protein vitellogenin-A1. Involved in regulation of spermatozoa development. Required for normal female longevity when mosquitoes are maintained on regular sugar meal. Binds long chain fatty acids. In terms of biological role, (Microbial infection) Facilitates shedding of dengue virus type 2 particles into mosquito saliva. Does not affect dengue virus type 2 replication or infection prevalence in midgut and salivary glands at 14 days after blood feeding. Its function is as follows. (Microbial infection) Facilitates shedding of Zika virus particles into mosquito saliva. Does not affect Zika virus replication or infection prevalence in midgut and salivary glands at 14 days after blood feeding. The chain is Odorant-binding protein 22 from Aedes aegypti (Yellowfever mosquito).